Reading from the N-terminus, the 591-residue chain is Parathyroid hormone/parathyroid hormone-related peptide receptor (591 aa).

The N-terminal stretch at 1-26 (MGTARIAPSLALLLCCPVLSSAYALV) is a signal peptide. The Extracellular portion of the chain corresponds to 27-188 (DADDVFTKEE…REREVFDRLG (162 aa)). 3 cysteine pairs are disulfide-bonded: Cys48–Cys117, Cys108–Cys148, and Cys131–Cys170. Residues 67–104 (KGWTPASTSGKPRKEKAPGKFYPESKENKDVPTGSRRR) form a disordered region. Residues 81 to 96 (EKAPGKFYPESKENKD) are compositionally biased toward basic and acidic residues. N-linked (GlcNAc...) asparagine glycans are attached at residues Asn151, Asn161, Asn166, and Asn176. A helical membrane pass occupies residues 189 to 212 (MIYTVGYSMSLASLTVAVLILAYF). The Cytoplasmic portion of the chain corresponds to 213 to 219 (RRLHCTR). Residues 220 to 239 (NYIHMHMFLSFMLRAASIFV) traverse the membrane as a helical segment. The Extracellular portion of the chain corresponds to 240–282 (KDAVLYSGFTLDEAERLTEEELHIIAQVPPPPAAAAVGYAGCR). The helical transmembrane segment at 283-306 (VAVTFFLYFLATNYYWILVEGLYL) threads the bilayer. The Cytoplasmic portion of the chain corresponds to 307 to 320 (HSLIFMAFFSEKKY). Residues 321–342 (LWGFTIFGWGLPAVFVAVWVGV) traverse the membrane as a helical segment. At 343-361 (RATLANTGCWDLSSGHKKW) the chain is on the extracellular side. Residues 362–382 (IIQVPILASVVLNFILFINII) traverse the membrane as a helical segment. Over 383–409 (RVLATKLRETNAGRCDTRQQYRKLLRS) the chain is Cytoplasmic. Residues 410–428 (TLVLVPLFGVHYTVFMALP) traverse the membrane as a helical segment. The Extracellular segment spans residues 429–440 (YTEVSGTLWQIQ). The chain crosses the membrane as a helical span at residues 441–463 (MHYEMLFNSFQGFFVAIIYCFCN). At 464–591 (GEVQAEIRKS…LLQEEWETVM (128 aa)) the chain is on the cytoplasmic side. Positions 474 to 477 (WSRW) match the Important for interaction with G proteins motif.

The protein belongs to the G-protein coupled receptor 2 family. As to quaternary structure, homodimer in the absence of bound ligand. Peptide hormone binding leads to dissociation of the homodimer. In terms of processing, N-glycosylated. In terms of tissue distribution, detected in kidney.

It localises to the cell membrane. Functionally, G-protein-coupled receptor for parathyroid hormone (PTH) and for parathyroid hormone-related peptide (PTHLH). Ligand binding causes a conformation change that triggers signaling via guanine nucleotide-binding proteins (G proteins) and modulates the activity of downstream effectors, such as adenylate cyclase (cAMP). PTH1R is coupled to G(s) G alpha proteins and mediates activation of adenylate cyclase activity. PTHLH dissociates from PTH1R more rapidly than PTH; as consequence, the cAMP response induced by PTHLH decays faster than the response induced by PTH. The protein is Parathyroid hormone/parathyroid hormone-related peptide receptor (Pth1r) of Mus musculus (Mouse).